Reading from the N-terminus, the 123-residue chain is UPF0102 protein Fjoh_1217 (123 aa).

This sequence belongs to the UPF0102 family.

This is UPF0102 protein Fjoh_1217 from Flavobacterium johnsoniae (strain ATCC 17061 / DSM 2064 / JCM 8514 / BCRC 14874 / CCUG 350202 / NBRC 14942 / NCIMB 11054 / UW101) (Cytophaga johnsonae).